A 657-amino-acid chain; its full sequence is Major core protein 4b (657 aa).

The propeptide occupies M1–G61.

It belongs to the poxviridae protein P4b family. Post-translationally, the precursor is cleaved to a mature protein during virion maturation. Proteolytic cleavage of major core proteins P4a (A10L), P4b (A3L), and VP8 (L4R), which occurs at a late stage of core formation, is required for production of infectious mature virions (MV).

The protein localises to the virion. In terms of biological role, major component of the virion core that undergoes proteolytic processing during the immature virion (IV) to mature virion (MV) transition. Essential for the formation of a structurally normal core. The chain is Major core protein 4b from Vertebrata (FPV).